A 732-amino-acid chain; its full sequence is Serine/threonine-protein kinase CBK1 (732 aa).

Residues 111–240 (SFDNHLNVDP…STEAANSDMT (130 aa)) are disordered. Over residues 119-159 (DPNNTERFTSMDSMNFQPPASTFTQLGNGSSTNLSEISSGQ) the composition is skewed to polar residues. Low complexity predominate over residues 160–171 (NSLLSNHSVNNL). Residues 172-183 (PTALTSDTSPPV) are compositionally biased toward polar residues. Positions 185–221 (QHPQFQPQQQQQQQQPQQQQIFQQQQQQQQQQQQPQQ) are enriched in low complexity. The segment covering 222–240 (SRAVVNQSVSTEAANSDMT) has biased composition (polar residues). A coiled-coil region spans residues 281–310 (HAIERNQRRLELENKIANEDIGSSEERKNR). Residues 335–647 (FHTVKVIGKG…AEEIKQHPFF (313 aa)) form the Protein kinase domain. ATP-binding positions include 341–349 (IGKGAFGEV) and Lys-364. Catalysis depends on Asp-458, which acts as the Proton acceptor. The region spanning 648–730 (RGVDWDSIRD…SRFDYLTRKN (83 aa)) is the AGC-kinase C-terminal domain.

Belongs to the protein kinase superfamily. STE Ser/Thr protein kinase family. COT1 subfamily. As to quaternary structure, interacts with MOB2 and BCR1.

The protein resides in the bud neck. It is found in the cell tip. It carries out the reaction L-seryl-[protein] + ATP = O-phospho-L-seryl-[protein] + ADP + H(+). The catalysed reaction is L-threonyl-[protein] + ATP = O-phospho-L-threonyl-[protein] + ADP + H(+). Serine/threonine-protein kinase required for wild-type hyphal growth and transcriptional regulation of cell-wall-associated genes. Involved in the biofilm formation through phosphorylation of the master regulator of biofilm formation BCR1. The sequence is that of Serine/threonine-protein kinase CBK1 (CBK1) from Candida albicans (strain SC5314 / ATCC MYA-2876) (Yeast).